A 651-amino-acid polypeptide reads, in one-letter code: MIRSHERQAVAKATQPIVDREPIRSMKPGLALAALGIVFGDIGTSVLYSLQTVFSMENHAVRPTHGDVMGIISMIFWSILLVVCVKYVIFVMRADNDGEGGILALMALVRRLMASHKGTGMTALLLGIVGAGLFYGDSFITPAISVMSAVEGLTVANPDAEKIVLPASVVILTLLFIVQRRGTEVIGKAFGPVMATWFLTLAALGIPWIIHHPVIITALSPHWAILFSIERPAMAFIAMGAVVLTITGAEALYADMGHVGAPSIRLAWFGLVLPCLLINYLGQGAMILSHPDWIDNPFFRMAPDWATIPLVTIATMATVIASQAVISGAFSMSSEAARLGLLPRLGVRHTSKSEGGQIYIPEVNWTLFIGVLALILIFQTSSKLATAYGLAVTGTFLLTTSLFLVLAHRAWHWPMWALIFFGVIVGGVELSIFSANLLKIASGGWIPLLFATIVVIIMTTWRRGTAYIAKQRQDDEGPLDDFLNWMHETKPTRVPGLAVYPHPGRATTPLALLNNLRFNHVLHEHNIIISIVVENVPHVRHVNRIEKVDLGRPTDGITYIACHVGFTDSQDVPKALALAAAKCPWLKDHLDEAIYYLSLVDVKRDEPQQGAHMAGWRKMLYITMSRNQADRTRVFRIPRTRAVVMGEAVAL.

The next 12 helical transmembrane spans lie at 30–50 (LALA…LYSL), 71–91 (IISM…VIFV), 124–144 (LLLG…TPAI), 158–178 (PDAE…LFIV), 190–210 (FGPV…PWII), 233–253 (AMAF…EALY), 268–288 (WFGL…AMIL), 310–330 (LVTI…SGAF), 358–378 (IYIP…ILIF), 387–407 (AYGL…LVLA), 413–433 (WPMW…LSIF), and 437–457 (LLKI…VVII).

This sequence belongs to the HAK/KUP transporter (TC 2.A.72) family.

The protein localises to the cell membrane. The enzyme catalyses K(+)(in) + H(+)(in) = K(+)(out) + H(+)(out). Functionally, transport of potassium into the cell. Likely operates as a K(+):H(+) symporter. The chain is Probable potassium transport system protein Kup from Cutibacterium acnes (strain DSM 16379 / KPA171202) (Propionibacterium acnes).